We begin with the raw amino-acid sequence, 616 residues long: Chaperone protein HscA (616 aa).

Belongs to the heat shock protein 70 family.

In terms of biological role, chaperone involved in the maturation of iron-sulfur cluster-containing proteins. Has a low intrinsic ATPase activity which is markedly stimulated by HscB. Involved in the maturation of IscU. In Salmonella paratyphi A (strain ATCC 9150 / SARB42), this protein is Chaperone protein HscA.